The chain runs to 202 residues: uncharacterized protein (202 aa).

Helical transmembrane passes span 34–54 (AAYV…QARI), 102–122 (MGVA…PLVI), and 125–145 (ILPL…FNKA). A disordered region spans residues 165-202 (NKPAAAVTGTSSNSNNASAKSDGPTITELNENETEKSS). Over residues 168–185 (AAAVTGTSSNSNNASAKS) the composition is skewed to low complexity. Phosphoserine occurs at positions 185 and 201.

Belongs to the PHO88 family.

The protein resides in the endoplasmic reticulum membrane. This is an uncharacterized protein from Schizosaccharomyces pombe (strain 972 / ATCC 24843) (Fission yeast).